The chain runs to 310 residues: Oxygen-dependent coproporphyrinogen-III oxidase (310 aa).

Serine 92 serves as a coordination point for substrate. Residues histidine 96 and histidine 106 each contribute to the a divalent metal cation site. The active-site Proton donor is the histidine 106. 108–110 is a binding site for substrate; sequence NVR. Residues histidine 145 and histidine 175 each contribute to the a divalent metal cation site. The segment at 240-275 is important for dimerization; that stretch reads YVEFNLIWDRGTLFGLQSGGRTESILMSMPPLARWE. 258-260 is a binding site for substrate; sequence GGR.

It belongs to the aerobic coproporphyrinogen-III oxidase family. Homodimer. A divalent metal cation is required as a cofactor.

The protein localises to the cytoplasm. The enzyme catalyses coproporphyrinogen III + O2 + 2 H(+) = protoporphyrinogen IX + 2 CO2 + 2 H2O. It participates in porphyrin-containing compound metabolism; protoporphyrin-IX biosynthesis; protoporphyrinogen-IX from coproporphyrinogen-III (O2 route): step 1/1. Its function is as follows. Involved in the heme biosynthesis. Catalyzes the aerobic oxidative decarboxylation of propionate groups of rings A and B of coproporphyrinogen-III to yield the vinyl groups in protoporphyrinogen-IX. This Pectobacterium carotovorum subsp. carotovorum (strain PC1) protein is Oxygen-dependent coproporphyrinogen-III oxidase.